A 313-amino-acid chain; its full sequence is Secreted mono- and diacylglycerol lipase MDL5 (313 aa).

The signal sequence occupies residues 1–20 (MQLQYVLTLLWIIFAQNVFS). An intrachain disulfide couples cysteine 66 to cysteine 306. 2 N-linked (GlcNAc...) asparagine glycosylation sites follow: asparagine 72 and asparagine 111. Serine 180 (nucleophile) is an active-site residue. Residue aspartate 238 is part of the active site. A glycan (N-linked (GlcNAc...) asparagine) is linked at asparagine 263. Histidine 290 is an active-site residue.

This sequence belongs to the AB hydrolase superfamily. Lipase family. Class 3 subfamily.

It is found in the secreted. Its subcellular location is the cell wall. The catalysed reaction is a monoacylglycerol + H2O = glycerol + a fatty acid + H(+). The enzyme catalyses a diacylglycerol + H2O = a monoacylglycerol + a fatty acid + H(+). In terms of biological role, secreted lipase involved in Dandruff and seborrheic dermatitis (D/SD) probably via lipase-mediated breakdown of sebaceous lipids and release of irritating free fatty acids. Shows activity against monoglyceride and diglyceride substrates, but not triglyceride substrates and does not exhibit regio-selective production of diacylglycerols. Cleaves oleic acid from 1,2 isomers of diolein on both the 1 and the 2 position of the glycerol backbone, resulting mainly in free fatty acids but no monoolein is detected. Shows activity on monoolein and liberates mostly free fatty acids, but can also perform the reverse reaction and produce diolein. In Malassezia globosa (strain ATCC MYA-4612 / CBS 7966) (Dandruff-associated fungus), this protein is Secreted mono- and diacylglycerol lipase MDL5.